The primary structure comprises 373 residues: S-adenosylmethionine:tRNA ribosyltransferase-isomerase (373 aa).

Belongs to the QueA family. As to quaternary structure, monomer.

Its subcellular location is the cytoplasm. The catalysed reaction is 7-aminomethyl-7-carbaguanosine(34) in tRNA + S-adenosyl-L-methionine = epoxyqueuosine(34) in tRNA + adenine + L-methionine + 2 H(+). It functions in the pathway tRNA modification; tRNA-queuosine biosynthesis. Its function is as follows. Transfers and isomerizes the ribose moiety from AdoMet to the 7-aminomethyl group of 7-deazaguanine (preQ1-tRNA) to give epoxyqueuosine (oQ-tRNA). In Rhizobium etli (strain CIAT 652), this protein is S-adenosylmethionine:tRNA ribosyltransferase-isomerase.